The following is a 459-amino-acid chain: Palmitoyltransferase PFA4 (459 aa).

Residues 1–9 (MAARNWSRV) are Cytoplasmic-facing. A helical membrane pass occupies residues 10–30 (WVGGTVILISFIAFSSQIFVI). The Lumenal portion of the chain corresponds to 31–37 (WPWYGRE). The chain crosses the membrane as a helical span at residues 38-58 (ISLDLLKLLVPLNLAAFMIFW). Over 59–138 (NYRLCVITSP…GNCVGFYNQG (80 aa)) the chain is Cytoplasmic. The DHHC domain maps to 95 to 145 (RYCKNCEHYKPPRAHHCRQCKTCWLKLDHHCPWIGNCVGFYNQGHFIRFLL). Cys125 acts as the S-palmitoyl cysteine intermediate in catalysis. The helical transmembrane segment at 139-159 (HFIRFLLWVDIGTTFHLIIMV) threads the bilayer. Residues 160–177 (RRVLYIAEYYHQEPTLAD) lie on the Lumenal side of the membrane. A helical membrane pass occupies residues 178 to 198 (VLFLVFNFATCVPVWLCVGMF). Residues 199–459 (SIYHVYLACG…DTEEESGYAH (261 aa)) are Cytoplasmic-facing. Residues 278 to 379 (HTTQYFWPPQ…DYDHYDEGPM (102 aa)) form a disordered region. The span at 286–299 (PQDPSRLPNPPPIP) shows a compositional bias: pro residues. The span at 310-322 (NGFNPNLQPTNSL) shows a compositional bias: polar residues. Positions 331 to 356 (HIDEDEHSHERDQYRHYSSGEERDND) are enriched in basic and acidic residues.

It belongs to the DHHC palmitoyltransferase family. PFA4 subfamily.

Its subcellular location is the endoplasmic reticulum membrane. It carries out the reaction L-cysteinyl-[protein] + hexadecanoyl-CoA = S-hexadecanoyl-L-cysteinyl-[protein] + CoA. In terms of biological role, mediates the reversible addition of palmitate to target proteins, thereby regulating their membrane association and biological function. This chain is Palmitoyltransferase PFA4, found in Cryptococcus neoformans var. neoformans serotype D (strain B-3501A) (Filobasidiella neoformans).